The chain runs to 180 residues: uncharacterized protein (180 aa).

Positions 3–33 form a coiled coil; it reads QQQSNNSNDNKEQLDRVIESLNRVNSETKQI.

This is an uncharacterized protein from Acanthamoeba polyphaga (Amoeba).